The following is a 247-amino-acid chain: ATP synthase subunit a, chloroplastic (247 aa).

The next 5 membrane-spanning stretches (helical) occupy residues 38 to 58, 95 to 115, 134 to 154, 199 to 219, and 220 to 240; these read QVLITSWVVIAILLASATLAV, VPFIGTMFLFIFVSNWSGALL, INTTVALALLTSVAYFYAGLS, LVVVVLVSLVPSVVPIPVMFL, and GLFTSGIQALIFATLAAAYIG.

This sequence belongs to the ATPase A chain family. F-type ATPases have 2 components, CF(1) - the catalytic core - and CF(0) - the membrane proton channel. CF(1) has five subunits: alpha(3), beta(3), gamma(1), delta(1), epsilon(1). CF(0) has four main subunits: a, b, b' and c.

The protein resides in the plastid. It localises to the chloroplast thylakoid membrane. In terms of biological role, key component of the proton channel; it plays a direct role in the translocation of protons across the membrane. The protein is ATP synthase subunit a, chloroplastic of Lactuca sativa (Garden lettuce).